A 430-amino-acid polypeptide reads, in one-letter code: Adenylosuccinate synthetase (430 aa).

GTP contacts are provided by residues Gly-12–Lys-18 and Gly-40–Thr-42. Residue Asp-13 is the Proton acceptor of the active site. Mg(2+) contacts are provided by Asp-13 and Gly-40. Residues Asp-13–Lys-16, Asn-38–His-41, Thr-130, Arg-144, Gln-224, Thr-239, and Arg-303 each bind IMP. His-41 (proton donor) is an active-site residue. Position 299–305 (Ala-299–Arg-305) interacts with substrate. GTP is bound by residues Arg-305, Lys-331 to Asp-333, and Ser-413 to Gly-415.

This sequence belongs to the adenylosuccinate synthetase family. In terms of assembly, homodimer. Requires Mg(2+) as cofactor.

Its subcellular location is the cytoplasm. It catalyses the reaction IMP + L-aspartate + GTP = N(6)-(1,2-dicarboxyethyl)-AMP + GDP + phosphate + 2 H(+). It functions in the pathway purine metabolism; AMP biosynthesis via de novo pathway; AMP from IMP: step 1/2. Its function is as follows. Plays an important role in the de novo pathway of purine nucleotide biosynthesis. Catalyzes the first committed step in the biosynthesis of AMP from IMP. This is Adenylosuccinate synthetase from Trichlorobacter lovleyi (strain ATCC BAA-1151 / DSM 17278 / SZ) (Geobacter lovleyi).